The sequence spans 136 residues: Acidic phospholipase A2 EC-I (136 aa).

Positions 1–16 (MKTLWIVAVWLIAVEG) are cleaved as a signal peptide. Disulfide bonds link cysteine 42-cysteine 129, cysteine 44-cysteine 60, cysteine 59-cysteine 111, cysteine 65-cysteine 136, cysteine 66-cysteine 104, cysteine 73-cysteine 97, and cysteine 91-cysteine 102. 3 residues coordinate Ca(2+): tyrosine 43, glycine 45, and glycine 47. The active site involves histidine 63. Position 64 (aspartate 64) interacts with Ca(2+). Residue aspartate 105 is part of the active site. The interval 112 to 133 (LGENVNTYDKKYKSYEDCTEEV) is may be responsible for inhibition of the platelet-aggregation activity.

Belongs to the phospholipase A2 family. Group II subfamily. D49 sub-subfamily. As to quaternary structure, monomer. The cofactor is Ca(2+). In terms of tissue distribution, expressed by the venom gland.

It is found in the secreted. The enzyme catalyses a 1,2-diacyl-sn-glycero-3-phosphocholine + H2O = a 1-acyl-sn-glycero-3-phosphocholine + a fatty acid + H(+). Snake venom phospholipase A2 (PLA2) that inhibits human platelet aggregation induced by ADP, collagen and epinephrin (possibly by binding the platelet receptor alpha-IIb/beta-III) and induces mild edema in the foot pads of mice. PLA2 catalyzes the calcium-dependent hydrolysis of the 2-acyl groups in 3-sn-phosphoglycerides. The polypeptide is Acidic phospholipase A2 EC-I (Echis carinatus (Saw-scaled viper)).